The following is a 349-amino-acid chain: Sperm acrosomal protein FSA-ACR.1 (349 aa).

A signal peptide spans 1 to 8 (MKEVYLVG). Residues 1-265 (MKEVYLVGYA…EQPSGIPPSS (265 aa)) form a disordered region. Residues 63-114 (TSGEHTSVEHASAEHSSTEHTSGEHASGEHTSGERATGEHTSSEHATSEHTS) are compositionally biased toward basic and acidic residues. Polar residues-rich tracts occupy residues 117–142 (QPSG…SGEQ) and 154–171 (SGEQ…TSGE). The span at 178–189 (PSGEHAVAEKPS) shows a compositional bias: basic and acidic residues. The segment covering 221 to 248 (EQASIEKASSEQASAEQASAEQASSEQA) has biased composition (low complexity). N-linked (GlcNAc...) asparagine glycosylation is present at asparagine 342.

It to acrosomal proteins SP-10. In terms of tissue distribution, testis.

Its subcellular location is the cytoplasmic vesicle. It localises to the secretory vesicle. It is found in the acrosome. This is Sperm acrosomal protein FSA-ACR.1 from Vulpes vulpes (Red fox).